We begin with the raw amino-acid sequence, 228 residues long: 5'-methylthioadenosine/S-adenosylhomocysteine nucleosidase (228 aa).

Residue Glu11 is the Proton acceptor of the active site. Substrate contacts are provided by residues Gly77, Ile151, and 172 to 173 (ME). Catalysis depends on Asp196, which acts as the Proton donor.

Belongs to the PNP/UDP phosphorylase family. MtnN subfamily.

The enzyme catalyses S-adenosyl-L-homocysteine + H2O = S-(5-deoxy-D-ribos-5-yl)-L-homocysteine + adenine. The catalysed reaction is S-methyl-5'-thioadenosine + H2O = 5-(methylsulfanyl)-D-ribose + adenine. It carries out the reaction 5'-deoxyadenosine + H2O = 5-deoxy-D-ribose + adenine. It functions in the pathway amino-acid biosynthesis; L-methionine biosynthesis via salvage pathway; S-methyl-5-thio-alpha-D-ribose 1-phosphate from S-methyl-5'-thioadenosine (hydrolase route): step 1/2. In terms of biological role, catalyzes the irreversible cleavage of the glycosidic bond in both 5'-methylthioadenosine (MTA) and S-adenosylhomocysteine (SAH/AdoHcy) to adenine and the corresponding thioribose, 5'-methylthioribose and S-ribosylhomocysteine, respectively. Also cleaves 5'-deoxyadenosine, a toxic by-product of radical S-adenosylmethionine (SAM) enzymes, into 5-deoxyribose and adenine. The protein is 5'-methylthioadenosine/S-adenosylhomocysteine nucleosidase of Staphylococcus carnosus (strain TM300).